The primary structure comprises 270 residues: SAGA-associated factor 29 homolog A (270 aa).

Residue S2 is modified to N-acetylserine. The disordered stretch occupies residues L85 to V113. Positions R95–V113 are enriched in basic and acidic residues. Positions E125–Q270 constitute an SGF29 C-terminal domain. Histone H3K4me3 N-terminus binding stretches follow at residues D168–E170 and G217–A220. The interval F242–D245 is histone H3K4me3 binding.

The protein belongs to the SGF29 family. In terms of tissue distribution, expressed in roots, rosette leaves, cauline leaves, stems and flowers.

It is found in the nucleus. Functionally, chromatin reader component of the transcription regulatory histone acetylation (HAT) complex SAGA. Involved in salt stress tolerance. Enhances the effect of ADA2B in the positive regulation of salt-induced gene expression. This Arabidopsis thaliana (Mouse-ear cress) protein is SAGA-associated factor 29 homolog A.